A 468-amino-acid polypeptide reads, in one-letter code: MSSSLWLQCLQQLQEELPATEFSMWVRPLQAELNDNTLTLFAPNRFVLDWVRDKYLNSINRLLQEYCGNDVPSLRFEVGSRRVAAPKPAPTRTPADVAAESSAPAQLQARKPVHKTWDDDAQVIADINHRSNVNPKHKFNNFVEGKSNQLGLAAARQVSDNPGAAYNPLFLYGGTGLGKTHLLHAVGNAIVDNNPNAKVVYMHSERFVQDMVKALQNNAIEEFKRYYRSVDALLIDDIQFFANKERSQEEFFHTFNALLEGNQQIILTSDRYPKEISGVEDRLKSRFGWGLTVAIEPPELETRVAILMKKAEDHQIHLADEVAFFIAKRLRSNVRELEGALNRVIANANFTGRPITIDFVREALRDLLALQEKLVTIDNIQKTVAEYYKIKVADLLSKRRSRSVARPRQLAMALAKELTNHSLPEIGDAFGGRDHTTVLHACRKIEQLREESHDIKEDYSNLIRTLSS.

Residues 1–84 form a domain I, interacts with DnaA modulators region; sequence MSSSLWLQCL…RFEVGSRRVA (84 aa). The domain II stretch occupies residues 84-131; sequence AAPKPAPTRTPADVAAESSAPAQLQARKPVHKTWDDDAQVIADINHRS. Over residues 85–95 the composition is skewed to low complexity; that stretch reads APKPAPTRTPA. The interval 85–104 is disordered; it reads APKPAPTRTPADVAAESSAP. Residues 132 to 348 form a domain III, AAA+ region region; that stretch reads NVNPKHKFNN…GALNRVIANA (217 aa). Residues glycine 176, glycine 178, lysine 179, and threonine 180 each contribute to the ATP site. Residues 349-468 are domain IV, binds dsDNA; that stretch reads NFTGRPITID…YSNLIRTLSS (120 aa).

This sequence belongs to the DnaA family. As to quaternary structure, oligomerizes as a right-handed, spiral filament on DNA at oriC.

The protein resides in the cytoplasm. In terms of biological role, plays an essential role in the initiation and regulation of chromosomal replication. ATP-DnaA binds to the origin of replication (oriC) to initiate formation of the DNA replication initiation complex once per cell cycle. Binds the DnaA box (a 9 base pair repeat at the origin) and separates the double-stranded (ds)DNA. Forms a right-handed helical filament on oriC DNA; dsDNA binds to the exterior of the filament while single-stranded (ss)DNA is stabiized in the filament's interior. The ATP-DnaA-oriC complex binds and stabilizes one strand of the AT-rich DNA unwinding element (DUE), permitting loading of DNA polymerase. After initiation quickly degrades to an ADP-DnaA complex that is not apt for DNA replication. Binds acidic phospholipids. Functionally, complements a temperature-sensitive E.coli mutant, the DnaA consensus is 5'-TT(A/T)TNCACA-3'. In Vibrio harveyi (Beneckea harveyi), this protein is Chromosomal replication initiator protein DnaA.